The sequence spans 296 residues: 4-hydroxybenzoate octaprenyltransferase (296 aa).

The next 8 helical transmembrane spans lie at 28–48, 51–71, 102–122, 143–163, 174–194, 212–232, 233–253, and 274–294; these read IGTLLLLWPTYWALWLASDGI, LAVLAAFTIGTFLMRSAGCVI, LLLTAFLCLLAALCLIPLNHL, FFPIPQFYLGLAFSFGIPMAF, AWILFAANVLWTLAYDTVYAM, FGRYDIAAVMLCHGGFTLLMA, VLGAVIGAAWAYWTAIPIVLL, and FLANNRIGWVWFAAIFAHTFF.

The protein belongs to the UbiA prenyltransferase family. The cofactor is Mg(2+).

It is found in the cell inner membrane. It catalyses the reaction all-trans-octaprenyl diphosphate + 4-hydroxybenzoate = 4-hydroxy-3-(all-trans-octaprenyl)benzoate + diphosphate. It functions in the pathway cofactor biosynthesis; ubiquinone biosynthesis. In terms of biological role, catalyzes the prenylation of para-hydroxybenzoate (PHB) with an all-trans polyprenyl group. Mediates the second step in the final reaction sequence of ubiquinone-8 (UQ-8) biosynthesis, which is the condensation of the polyisoprenoid side chain with PHB, generating the first membrane-bound Q intermediate 3-octaprenyl-4-hydroxybenzoate. The sequence is that of 4-hydroxybenzoate octaprenyltransferase from Neisseria gonorrhoeae (strain NCCP11945).